The sequence spans 562 residues: Oxygen-dependent choline dehydrogenase (562 aa).

An FAD-binding site is contributed by 4-33 (DYIIIGAGSAGNVLATRLTEDPNTTVLLLE). The active-site Proton acceptor is histidine 473.

This sequence belongs to the GMC oxidoreductase family. FAD serves as cofactor.

It carries out the reaction choline + A = betaine aldehyde + AH2. It catalyses the reaction betaine aldehyde + NAD(+) + H2O = glycine betaine + NADH + 2 H(+). The protein operates within amine and polyamine biosynthesis; betaine biosynthesis via choline pathway; betaine aldehyde from choline (cytochrome c reductase route): step 1/1. In terms of biological role, involved in the biosynthesis of the osmoprotectant glycine betaine. Catalyzes the oxidation of choline to betaine aldehyde and betaine aldehyde to glycine betaine at the same rate. The sequence is that of Oxygen-dependent choline dehydrogenase from Escherichia coli O45:K1 (strain S88 / ExPEC).